Consider the following 378-residue polypeptide: Carbamoyl phosphate synthase small chain (378 aa).

Residues 1 to 189 (MTKPAILALA…DSHPEIAASE (189 aa)) are CPSase. L-glutamine-binding residues include S47, G241, and G243. In terms of domain architecture, Glutamine amidotransferase type-1 spans 193–378 (HVVAYDYGVK…RFIDAMAKRR (186 aa)). The active-site Nucleophile is the C269. Residues L270, Q273, N311, G313, and F314 each contribute to the L-glutamine site. Active-site residues include H353 and E355.

It belongs to the CarA family. Composed of two chains; the small (or glutamine) chain promotes the hydrolysis of glutamine to ammonia, which is used by the large (or ammonia) chain to synthesize carbamoyl phosphate. Tetramer of heterodimers (alpha,beta)4.

It catalyses the reaction hydrogencarbonate + L-glutamine + 2 ATP + H2O = carbamoyl phosphate + L-glutamate + 2 ADP + phosphate + 2 H(+). It carries out the reaction L-glutamine + H2O = L-glutamate + NH4(+). It participates in amino-acid biosynthesis; L-arginine biosynthesis; carbamoyl phosphate from bicarbonate: step 1/1. The protein operates within pyrimidine metabolism; UMP biosynthesis via de novo pathway; (S)-dihydroorotate from bicarbonate: step 1/3. Its function is as follows. Small subunit of the glutamine-dependent carbamoyl phosphate synthetase (CPSase). CPSase catalyzes the formation of carbamoyl phosphate from the ammonia moiety of glutamine, carbonate, and phosphate donated by ATP, constituting the first step of 2 biosynthetic pathways, one leading to arginine and/or urea and the other to pyrimidine nucleotides. The small subunit (glutamine amidotransferase) binds and cleaves glutamine to supply the large subunit with the substrate ammonia. This is Carbamoyl phosphate synthase small chain from Pseudomonas syringae pv. tomato (strain ATCC BAA-871 / DC3000).